The chain runs to 341 residues: Phenylalanine--tRNA ligase alpha subunit (341 aa).

Position 256 (E256) interacts with Mg(2+).

This sequence belongs to the class-II aminoacyl-tRNA synthetase family. Phe-tRNA synthetase alpha subunit type 1 subfamily. Tetramer of two alpha and two beta subunits. Mg(2+) is required as a cofactor.

It localises to the cytoplasm. The enzyme catalyses tRNA(Phe) + L-phenylalanine + ATP = L-phenylalanyl-tRNA(Phe) + AMP + diphosphate + H(+). This chain is Phenylalanine--tRNA ligase alpha subunit, found in Chlamydia caviae (strain ATCC VR-813 / DSM 19441 / 03DC25 / GPIC) (Chlamydophila caviae).